Consider the following 284-residue polypeptide: RNase adapter protein RapZ (284 aa).

Glycine 8–serine 15 lines the ATP pocket. Residue aspartate 56–asparagine 59 participates in GTP binding. An RNA-binding region spans residues arginine 266–threonine 284.

It belongs to the RapZ-like family. RapZ subfamily. In terms of assembly, homotrimer.

Functionally, modulates the synthesis of GlmS, by affecting the processing and stability of the regulatory small RNA GlmZ. When glucosamine-6-phosphate (GlcN6P) concentrations are high in the cell, RapZ binds GlmZ and targets it to cleavage by RNase E. Consequently, GlmZ is inactivated and unable to activate GlmS synthesis. Under low GlcN6P concentrations, RapZ is sequestered and inactivated by an other regulatory small RNA, GlmY, preventing GlmZ degradation and leading to synthesis of GlmS. The polypeptide is RNase adapter protein RapZ (Salmonella typhi).